The primary structure comprises 184 residues: uncharacterized protein (184 aa).

The N-terminal stretch at Met-1–Ala-23 is a signal peptide.

It is found in the secreted. This is an uncharacterized protein from Homo sapiens (Human).